The following is a 231-amino-acid chain: tRNA (guanine-N(7)-)-methyltransferase (231 aa).

4 residues coordinate S-adenosyl-L-methionine: E62, E87, D114, and D136. Residue D136 is part of the active site. Residues K140, D172, and 210–213 (TRYE) each bind substrate.

It belongs to the class I-like SAM-binding methyltransferase superfamily. TrmB family.

It carries out the reaction guanosine(46) in tRNA + S-adenosyl-L-methionine = N(7)-methylguanosine(46) in tRNA + S-adenosyl-L-homocysteine. Its pathway is tRNA modification; N(7)-methylguanine-tRNA biosynthesis. Functionally, catalyzes the formation of N(7)-methylguanine at position 46 (m7G46) in tRNA. This Zymomonas mobilis subsp. mobilis (strain ATCC 31821 / ZM4 / CP4) protein is tRNA (guanine-N(7)-)-methyltransferase.